A 119-amino-acid chain; its full sequence is Protein TusC (119 aa).

The protein belongs to the DsrF/TusC family. As to quaternary structure, heterohexamer, formed by a dimer of trimers. The hexameric TusBCD complex contains 2 copies each of TusB, TusC and TusD. The TusBCD complex interacts with TusE.

The protein resides in the cytoplasm. Part of a sulfur-relay system required for 2-thiolation of 5-methylaminomethyl-2-thiouridine (mnm(5)s(2)U) at tRNA wobble positions. The chain is Protein TusC from Escherichia fergusonii (strain ATCC 35469 / DSM 13698 / CCUG 18766 / IAM 14443 / JCM 21226 / LMG 7866 / NBRC 102419 / NCTC 12128 / CDC 0568-73).